A 402-amino-acid polypeptide reads, in one-letter code: NADH-quinone oxidoreductase subunit D (402 aa).

This sequence belongs to the complex I 49 kDa subunit family. In terms of assembly, NDH-1 is composed of 14 different subunits. Subunits NuoB, C, D, E, F, and G constitute the peripheral sector of the complex.

It is found in the cell inner membrane. The enzyme catalyses a quinone + NADH + 5 H(+)(in) = a quinol + NAD(+) + 4 H(+)(out). Its function is as follows. NDH-1 shuttles electrons from NADH, via FMN and iron-sulfur (Fe-S) centers, to quinones in the respiratory chain. The immediate electron acceptor for the enzyme in this species is believed to be ubiquinone. Couples the redox reaction to proton translocation (for every two electrons transferred, four hydrogen ions are translocated across the cytoplasmic membrane), and thus conserves the redox energy in a proton gradient. This Azorhizobium caulinodans (strain ATCC 43989 / DSM 5975 / JCM 20966 / LMG 6465 / NBRC 14845 / NCIMB 13405 / ORS 571) protein is NADH-quinone oxidoreductase subunit D.